A 410-amino-acid polypeptide reads, in one-letter code: Sprouty-related, EVH1 domain-containing protein 2 (410 aa).

The 118-residue stretch at Thr-5–Leu-122 folds into the WH1 domain. The interval Thr-127–Ser-171 is disordered. Residues Thr-146 to Ser-156 show a composition bias toward polar residues. The region spanning Ser-197 to Gly-252 is the KBD domain. Tyr-224 and Tyr-227 each carry phosphotyrosine. The segment at Asp-274–Glu-294 is disordered. The region spanning Arg-300 to Ala-408 is the SPR domain.

Homodimer and heterodimer. Able to interact with SPRED1 to form heterodimers. Interacts with RAS. May interact with ZDHHC13 (via ANK repeats) and ZDHHC17 (via ANK repeats). Interacts with TESK1. Interacts with NF1. Post-translationally, phosphorylated on serine and threonine residues. Phosphorylated on tyrosine. Phosphorylation of Tyr-224 and Tyr-227 are required for ubiquitination. Ubiquitinated; leading to degradation by the proteasome. As to expression, predominantly expressed in lung, liver and testis. In testis, it is specially found in mature spermatids projecting into the lumen of the seminiferous. Strongly expressed in glandular epithelia. Also expressed in embryonic tissues such as heart, lung, liver and brain.

Its subcellular location is the cell membrane. It is found in the cytoplasmic vesicle. The protein resides in the secretory vesicle membrane. It localises to the cytoplasm. Functionally, negatively regulates Ras signaling pathways and downstream activation of MAP kinases. Recruits and translocates NF1 to the cell membrane, thereby enabling NF1-dependent hydrolysis of active GTP-bound Ras to inactive GDP-bound Ras. Inhibits fibroblast growth factor (FGF)-induced retinal lens fiber differentiation, probably by inhibiting FGF-mediated phosphorylation of ERK1/2. Inhibits TGFB-induced epithelial-to-mesenchymal transition in lens epithelial cells. The chain is Sprouty-related, EVH1 domain-containing protein 2 (Spred2) from Mus musculus (Mouse).